Consider the following 359-residue polypeptide: Nicotinate-nucleotide--dimethylbenzimidazole phosphoribosyltransferase (359 aa).

Glutamate 318 functions as the Proton acceptor in the catalytic mechanism.

The protein belongs to the CobT family. Homodimer.

It catalyses the reaction 5,6-dimethylbenzimidazole + nicotinate beta-D-ribonucleotide = alpha-ribazole 5'-phosphate + nicotinate + H(+). The protein operates within nucleoside biosynthesis; alpha-ribazole biosynthesis; alpha-ribazole from 5,6-dimethylbenzimidazole: step 1/2. Functionally, catalyzes the synthesis of alpha-ribazole-5'-phosphate from nicotinate mononucleotide (NAMN) and 5,6-dimethylbenzimidazole (DMB). In Shigella flexneri serotype 5b (strain 8401), this protein is Nicotinate-nucleotide--dimethylbenzimidazole phosphoribosyltransferase.